The primary structure comprises 1163 residues: Reticulon-4 (1163 aa).

Met-1 is modified (N-acetylmethionine). Disordered stretches follow at residues 1-184 (MEDI…AASE) and 244-270 (SAVSSSEGTIEETLNEASKELPERATN). Residues 1 to 989 (MEDIDQSSLV…LYWRDIKKTG (989 aa)) are Cytoplasmic-facing. Residues Ser-7 and Ser-16 each carry the phosphoserine modification. The segment covering 7–16 (SSLVSSSTDS) has biased composition (low complexity). Over residues 31–55 (EPEDEEDEEEEEDEEEDDEDLEELE) the composition is skewed to acidic residues. Over residues 62–79 (AAGLSAAAVPPAAAAPLL) the composition is skewed to low complexity. Positions 87 to 101 (PPAPRGPLPAAPPAA) are enriched in pro residues. Ser-107 bears the Phosphoserine mark. Over residues 138 to 147 (ARPPPPPPAG) the composition is skewed to pro residues. 3 positions are modified to phosphoserine: Ser-149, Ser-169, and Ser-171. 3 positions are modified to phosphoserine: Ser-329, Ser-333, and Ser-343. Position 347 is a phosphothreonine (Thr-347). A compositionally biased stretch (basic and acidic residues) spans 406–423 (DSLEQKSLGKDSEGRNED). Disordered regions lie at residues 406–437 (DSLEQKSLGKDSEGRNEDASFPSTPEPVKDSS) and 454–474 (TANTFPLLEDHTSENKTDEKK). The residue at position 425 (Ser-425) is a Phosphoserine. Thr-429 carries the post-translational modification Phosphothreonine. Over residues 461-474 (LEDHTSENKTDEKK) the composition is skewed to basic and acidic residues. Phosphoserine occurs at positions 488, 689, 726, 766, and 830. Position 832 is a phosphothreonine (Thr-832). Ser-855, Ser-922, and Ser-962 each carry phosphoserine. A Reticulon domain is found at 976–1163 (VVDLLYWRDI…KIPGLKRKAD (188 aa)). A helical transmembrane segment spans residues 990-1010 (VVFGASLFLLLSLTVFSIVSV). The Lumenal portion of the chain corresponds to 1011 to 1104 (TAYIALALLS…LMWVFTYVGA (94 aa)). Lys-1075 carries the post-translational modification N6-acetyllysine. Residues 1105-1125 (LFNGLTLLILALISLFSIPVI) traverse the membrane as a helical segment. Topologically, residues 1126 to 1163 (YERHQVQIDHYLGLANKSVKDAMAKIQAKIPGLKRKAD) are cytoplasmic.

In terms of assembly, binds to RTN4R. Interacts with ATL1. Interacts with TMEM170A. Interacts with RTN4IP1. As to quaternary structure, interacts in trans with CNTNAP1. Interacts with REEP5. Interacts with synaptic plasticity regulator PANTS; the interaction results in enhanced RTN4-mediated inhibition of AMPA receptor clustering. Interacts with GPR50. Homodimer. Interacts with BAD/Bcl-xl and BCL2. Interact with RTN3. Interacts with NGBR. Interacts with SPTLC1. Interacts with GRAMD4. Interacts with CDH5. Interacts with BACE1 and BACE2. Interacts with REEP5. Interacts with RETREG3. In terms of assembly, interacts with BACE1 and BACE2. Interacts with TMEM33. As to expression, isoforms A, B and C are present in optic nerve, spinal cord and cerebral cortex. Isoforms A and B are present in dorsal root ganglion, sciatic nerve and PC12 cells after longer exposure. Isoforms B and C are detected in kidney, cartilage, skin, lung and spleen. Isoform C is expressed at high level in skeletal muscle. In adult animals isoform A is expressed mainly in the nervous system.

The protein resides in the endoplasmic reticulum membrane. The protein localises to the cell membrane. It localises to the synapse. Its subcellular location is the cell junction. Its function is as follows. Required to induce the formation and stabilization of endoplasmic reticulum (ER) tubules. They regulate membrane morphogenesis in the ER by promoting tubular ER production. They influence nuclear envelope expansion, nuclear pore complex formation and proper localization of inner nuclear membrane proteins. However each isoform have specific functions mainly depending on their tissue expression specificities. Developmental neurite growth regulatory factor with a role as a negative regulator of axon-axon adhesion and growth, and as a facilitator of neurite branching. Regulates neurite fasciculation, branching and extension in the developing nervous system. Involved in down-regulation of growth, stabilization of wiring and restriction of plasticity in the adult CNS. Regulates the radial migration of cortical neurons via an RTN4R-LINGO1 containing receptor complex. Acts as a negative regulator of central nervous system angiogenesis. Inhibits spreading, migration and sprouting of primary brain microvascular endothelial cells (MVECs). Also induces the retraction of MVECs lamellipodia and filopodia in a ROCK pathway-dependent manner. In terms of biological role, mainly function in endothelial cells and vascular smooth muscle cells, is also involved in immune system regulation. Modulator of vascular remodeling, promotes the migration of endothelial cells but inhibits the migration of vascular smooth muscle cells. Regulates endothelial sphingolipid biosynthesis with direct effects on vascular function and blood pressure. Inhibits serine palmitoyltransferase, SPTLC1, the rate-limiting enzyme of the novo sphingolipid biosynthetic pathway, thereby controlling production of endothelial sphingosine-1-phosphate (S1P). Required to promote macrophage homing and functions such as cytokine/chemokine gene expression involved in angiogenesis, arteriogenesis and tissue repair. Mediates ICAM1 induced transendothelial migration of leukocytes such as monocytes and neutrophils and acute inflammation. Necessary for immune responses triggered by nucleic acid sensing TLRs, such as TLR9, is required for proper TLR9 location to endolysosomes. Also involved in immune response to LPS. Plays a role in liver regeneration through the modulation of hepatocytes proliferation. Reduces the anti-apoptotic activity of Bcl-xl and Bcl-2. This is likely consecutive to their change in subcellular location, from the mitochondria to the endoplasmic reticulum, after binding and sequestration. With isoform C, inhibits BACE1 activity and amyloid precursor protein processing. Functionally, regulates cardiomyocyte apoptosis upon hypoxic conditions. With isoform B, inhibits BACE1 activity and amyloid precursor protein processing. In Rattus norvegicus (Rat), this protein is Reticulon-4 (Rtn4).